The following is a 246-amino-acid chain: Cell division protein ZapD (246 aa).

This sequence belongs to the ZapD family. Interacts with FtsZ.

The protein resides in the cytoplasm. In terms of biological role, cell division factor that enhances FtsZ-ring assembly. Directly interacts with FtsZ and promotes bundling of FtsZ protofilaments, with a reduction in FtsZ GTPase activity. This is Cell division protein ZapD from Vibrio atlanticus (strain LGP32) (Vibrio splendidus (strain Mel32)).